The primary structure comprises 547 residues: Chaperonin GroEL (547 aa).

Residues 30–33, K51, 87–91, G415, and D496 contribute to the ATP site; these read TLGP and DGTTT. The segment at 525 to 547 is disordered; the sequence is KPEPKSPAGGPGMGGMGGMDGMM. Gly residues predominate over residues 533 to 547; sequence GGPGMGGMGGMDGMM.

This sequence belongs to the chaperonin (HSP60) family. As to quaternary structure, forms a cylinder of 14 subunits composed of two heptameric rings stacked back-to-back. Interacts with the co-chaperonin GroES.

The protein localises to the cytoplasm. It catalyses the reaction ATP + H2O + a folded polypeptide = ADP + phosphate + an unfolded polypeptide.. Together with its co-chaperonin GroES, plays an essential role in assisting protein folding. The GroEL-GroES system forms a nano-cage that allows encapsulation of the non-native substrate proteins and provides a physical environment optimized to promote and accelerate protein folding. This chain is Chaperonin GroEL, found in Cereibacter sphaeroides (strain ATCC 17029 / ATH 2.4.9) (Rhodobacter sphaeroides).